A 196-amino-acid polypeptide reads, in one-letter code: Large ribosomal subunit protein mL66 (196 aa).

The transit peptide at Met1 to Gly34 directs the protein to the mitochondrion.

It belongs to the bacterial ribosomal protein bS18 family. Mitochondrion-specific ribosomal protein mL66 subfamily. In terms of assembly, component of the mitochondrial ribosome small subunit (28S) which comprises a 12S rRNA and about 30 distinct proteins.

Its subcellular location is the mitochondrion. The sequence is that of Large ribosomal subunit protein mL66 (MRPS18A) from Bos taurus (Bovine).